Consider the following 435-residue polypeptide: Adenylosuccinate synthetase (435 aa).

GTP-binding positions include 17–23 (GDEGKGK) and 45–47 (GHT). D18 serves as the catalytic Proton acceptor. The Mg(2+) site is built by D18 and G45. Residues 18–21 (DEGK), 43–46 (NAGH), T135, R149, Q230, T245, and R309 each bind IMP. H46 serves as the catalytic Proton donor. 305–311 (TVSGRAR) is a binding site for substrate. Residues R311, 337–339 (LLD), and 419–421 (SVG) each bind GTP.

It belongs to the adenylosuccinate synthetase family. Homodimer. Requires Mg(2+) as cofactor.

Its subcellular location is the cytoplasm. It carries out the reaction IMP + L-aspartate + GTP = N(6)-(1,2-dicarboxyethyl)-AMP + GDP + phosphate + 2 H(+). It participates in purine metabolism; AMP biosynthesis via de novo pathway; AMP from IMP: step 1/2. Functionally, plays an important role in the de novo pathway of purine nucleotide biosynthesis. Catalyzes the first committed step in the biosynthesis of AMP from IMP. This Spiroplasma citri protein is Adenylosuccinate synthetase.